A 158-amino-acid polypeptide reads, in one-letter code: Fucolectin (158 aa).

Residues Lys-16–Val-148 form an F5/8 type C-like region. Ca(2+) contacts are provided by Asn-35, Asp-38, Asn-40, and Ser-49. 3 disulfides stabilise this stretch: Cys-50/Cys-146, Cys-82/Cys-83, and Cys-108/Cys-124. Residues His-52 and Arg-79 each contribute to the alpha-L-fucose site. A Cell attachment site motif is present at residues Arg-79 to Asp-81. Arg-86 is a binding site for alpha-L-fucose. Ca(2+) contacts are provided by Cys-146 and Glu-147.

The protein belongs to the fucolectin family. Homotrimer.

The protein localises to the secreted. Acts as a defensive agent. Recognizes blood group fucosylated oligosaccharides including A, B, H and Lewis B-type antigens. Does not recognize Lewis A antigen and has low affinity for monovalent haptens. This chain is Fucolectin, found in Anguilla anguilla (European freshwater eel).